The following is a 658-amino-acid chain: Threonine--tRNA ligase (658 aa).

Residues methionine 1–threonine 64 form the TGS domain. A catalytic region spans residues aspartate 246–proline 549. The Zn(2+) site is built by cysteine 343, histidine 394, and histidine 526.

It belongs to the class-II aminoacyl-tRNA synthetase family. In terms of assembly, homodimer. Zn(2+) serves as cofactor.

It is found in the cytoplasm. It catalyses the reaction tRNA(Thr) + L-threonine + ATP = L-threonyl-tRNA(Thr) + AMP + diphosphate + H(+). Catalyzes the attachment of threonine to tRNA(Thr) in a two-step reaction: L-threonine is first activated by ATP to form Thr-AMP and then transferred to the acceptor end of tRNA(Thr). Also edits incorrectly charged L-seryl-tRNA(Thr). The sequence is that of Threonine--tRNA ligase from Bartonella bacilliformis (strain ATCC 35685 / KC583 / Herrer 020/F12,63).